Consider the following 498-residue polypeptide: Diacylglycerol O-acyltransferase 1 (498 aa).

The segment at 1-66 (MGDRGGAGSS…AHTRDKDGRT (66 aa)) is disordered. Residues 1 to 92 (MGDRGGAGSS…SLFSSDSGFS (92 aa)) lie on the Cytoplasmic side of the membrane. Residues 1–100 (MGDRGGAGSS…FSNYRGILNW (100 aa)) form an involved in homomerization region. The residue at position 20 (serine 20) is a Phosphoserine. A helical membrane pass occupies residues 93–127 (NYRGILNWCVVMLILSNARLFLENLIKYGILVDPI). Topologically, residues 128-139 (QVVSLFLKDPYS) are lumenal. The extracellular loop 1 (EL1) stretch occupies residues 128-139 (QVVSLFLKDPYS). The chain crosses the membrane as a helical span at residues 140–165 (WPAPCVIIASNIFVVAAFQIEKRLAV). Residues 140 to 498 (WPAPCVIIAS…VLNYDAPVGV (359 aa)) form an MBOAT fold region. At 166-170 (GALTE) the chain is on the cytoplasmic side. The chain crosses the membrane as a helical span at residues 171–193 (QMGLLLHVVNLATIICFPAAVAL). The Lumenal segment spans residues 194-200 (LVESITP). The helical transmembrane segment at 201-232 (VGSVFALASYSIMFLKLYSYRDVNLWCRQRRV) threads the bilayer. The Cytoplasmic portion of the chain corresponds to 233–284 (KAKAVSTGKKVSGAAAQQAVSYPDNLTYRDLYYFIFAPTLCYELNFPRSPRI). Residues 235–287 (KAVSTGKKVSGAAAQQAVSYPDNLTYRDLYYFIFAPTLCYELNFPRSPRIRKR) form an intracellular loop 1 (IL1) region. The helical transmembrane segment at 285–319 (RKRFLLRRVLEMLFFTQLQVGLIQQWMVPTIQNSM) threads the bilayer. The Lumenal portion of the chain corresponds to 320-326 (KPFKDMD). A helical transmembrane segment spans residues 327-364 (YSRIIERLLKLAVPNHLIWLIFFYWFFHSCLNAVAELL). At 365-410 (QFGDREFYRDWWNAESVTYFWQNWNIPVHKWCIRHFYKPMLRHGSS) the chain is on the cytoplasmic side. The segment at 365–410 (QFGDREFYRDWWNAESVTYFWQNWNIPVHKWCIRHFYKPMLRHGSS) is intracellular loop 2 (IL2). Residues 371 to 377 (FYRDWWN) carry the FYXDWWN motif motif. Residues 385-393 (WQNWNIPVH), tyrosine 401, and arginine 415 each bind an acyl-CoA. The interval 391-405 (PVHKWCIRHFYKPML) is amphipathic helix (AH). A helical transmembrane segment spans residues 411 to 431 (KWVARTGVFLTSAFFHEYLVS). The active site involves histidine 426. Topologically, residues 432 to 439 (VPLRMFRL) are lumenal. Residues 440–458 (WAFTAMMAQVPLAWIVGRF) traverse the membrane as a helical segment. Topologically, residues 459-460 (FQ) are cytoplasmic. A helical membrane pass occupies residues 461–492 (GNYGNAAVWVTLIIGQPVAVLMYVHDYYVLNY). An acyl-CoA is bound at residue tyrosine 488. At 493 to 498 (DAPVGV) the chain is on the lumenal side.

This sequence belongs to the membrane-bound acyltransferase family. Sterol o-acyltransferase subfamily. As to quaternary structure, homodimer or homotetramer; both forms have similar enzymatic activities.

It is found in the endoplasmic reticulum membrane. It carries out the reaction an acyl-CoA + a 1,2-diacyl-sn-glycerol = a triacyl-sn-glycerol + CoA. The enzyme catalyses all-trans-retinol + an acyl-CoA = an all-trans-retinyl ester + CoA. The catalysed reaction is 1-octadecanoyl-2-(5Z,8Z,11Z,14Z-eicosatetraenoyl)-sn-glycerol + (9Z)-octadecenoyl-CoA = 1-octadecanoyl-2-(5Z,8Z,11Z,14Z)-eicosatetraenoyl-3-(9Z)-octadecenoyl-sn-glycerol + CoA. It catalyses the reaction hexadecane-1,2-diol + 2 hexadecanoyl-CoA = 1,2-O,O-dihexadecanoyl-1,2-hexadecanediol + 2 CoA. It carries out the reaction hexadecane-1,2-diol + hexadecanoyl-CoA = 2-hydroxyhexadecyl hexadecanoate + CoA. The enzyme catalyses 2-(9Z-octadecenoyl)-glycerol + hexadecanoyl-CoA = 1-hexadecanoyl-2-(9Z-octadecenoyl)-sn-glycerol + CoA. The catalysed reaction is 1,2-di-(9Z-octadecenoyl)-sn-glycerol + hexadecanoyl-CoA = 1,2-di-(9Z)-octadecenoyl-3-hexadecanoyl-sn-glycerol + CoA. It catalyses the reaction hexadecan-1-ol + hexadecanoyl-CoA = hexadecanyl hexadecanoate + CoA. It carries out the reaction all-trans-retinol + hexadecanoyl-CoA = all-trans-retinyl hexadecanoate + CoA. The enzyme catalyses 13-cis-retinol + hexadecanoyl-CoA = 13-cis-retinyl hexadecanoate + CoA. The catalysed reaction is 1,2-di-(9Z-octadecenoyl)-sn-glycerol + (9Z)-octadecenoyl-CoA = 1,2,3-tri-(9Z-octadecenoyl)-glycerol + CoA. It catalyses the reaction 1,3-di-(9Z-octadecenoyl)-glycerol + (9Z)-octadecenoyl-CoA = 1,2,3-tri-(9Z-octadecenoyl)-glycerol + CoA. It carries out the reaction 2,3-di-(9Z)-octadecenoyl-sn-glycerol + (9Z)-octadecenoyl-CoA = 1,2,3-tri-(9Z-octadecenoyl)-glycerol + CoA. The enzyme catalyses 1-O-(9Z-octadecenyl)-glycerol + (9Z)-octadecenoyl-CoA = 1-O-(9Z-octadecyl)-3-(9Z-octadecenoyl)-glycerol + CoA. The catalysed reaction is 1-(9Z-octadecenoyl)-glycerol + (9Z)-octadecenoyl-CoA = 1,2-di-(9Z-octadecenoyl)-glycerol + CoA. It catalyses the reaction 2-(9Z-octadecenoyl)-glycerol + (9Z)-octadecenoyl-CoA = 1,2-di-(9Z-octadecenoyl)-sn-glycerol + CoA. It carries out the reaction 1-O-(9Z-octadecyl)-3-(9Z-octadecenoyl)-glycerol + (9Z)-octadecenoyl-CoA = 1-O-(9Z-octadecenyl)-2,3-di-(9Z-octadecenoyl)glycerol + CoA. The enzyme catalyses 1,2-di-(9Z-octadecenoyl)-glycerol + (9Z)-octadecenoate + H(+) = 1,2,3-tri-(9Z-octadecenoyl)-glycerol + H2O. Its pathway is lipid metabolism; glycerolipid metabolism. Its function is as follows. Catalyzes the terminal and only committed step in triacylglycerol synthesis by using diacylglycerol and fatty acyl CoA as substrates. Highly expressed in epithelial cells of the small intestine and its activity is essential for the absorption of dietary fats. In liver, plays a role in esterifying exogenous fatty acids to glycerol, and is required to synthesize fat for storage. Also present in female mammary glands, where it produces fat in the milk. May be involved in VLDL (very low density lipoprotein) assembly. In contrast to DGAT2 it is not essential for survival. Functions as the major acyl-CoA retinol acyltransferase (ARAT) in the skin, where it acts to maintain retinoid homeostasis and prevent retinoid toxicity leading to skin and hair disorders. Exhibits additional acyltransferase activities, includin acyl CoA:monoacylglycerol acyltransferase (MGAT), wax monoester and wax diester synthases. Also able to use 1-monoalkylglycerol (1-MAkG) as an acyl acceptor for the synthesis of monoalkyl-monoacylglycerol (MAMAG). The sequence is that of Diacylglycerol O-acyltransferase 1 from Mus musculus (Mouse).